The following is a 548-amino-acid chain: Sesquiterpene synthase TPS1 (548 aa).

Residues arginine 264, aspartate 301, aspartate 305, arginine 442, and aspartate 445 each contribute to the (2E,6E)-farnesyl diphosphate site. Mg(2+) contacts are provided by aspartate 301 and aspartate 305. A DDXXD motif motif is present at residues 301 to 305 (DDTYD). Mg(2+) contacts are provided by aspartate 445 and glutamate 453.

This sequence belongs to the terpene synthase family. Tpsa subfamily. Monomer. Mg(2+) serves as cofactor. As to expression, expressed in leaves and stems.

The protein localises to the cytoplasm. The enzyme catalyses (2E,6E)-farnesyl diphosphate = germacrene D + diphosphate. The catalysed reaction is (2E,6E)-farnesyl diphosphate = (-)-(E)-beta-caryophyllene + diphosphate. It catalyses the reaction (2E,6E)-farnesyl diphosphate = beta-copaene + diphosphate. The protein operates within secondary metabolite biosynthesis; terpenoid biosynthesis. Sesquiterpene synthase involved in the biosynthesis of volatile compounds. Mediates the conversion of (2E,6E)-farnesyl diphosphate (FPP) into germacrene D, (-)-(E)-beta-caryophyllene and beta-copaene. The chain is Sesquiterpene synthase TPS1 from Xanthium strumarium (Rough cocklebur).